The sequence spans 252 residues: Carboxymethylenebutenolidase (252 aa).

The tract at residues 1 to 28 is disordered; the sequence is MCHNKSSAPPTPAHISIQQNRTPGTDPV. Active-site residues include Cys126, Asp183, and His214.

Belongs to the dienelactone hydrolase family.

It catalyses the reaction 2-(5-oxo-2,5-dihydrofuran-2-ylidene)acetate + H2O = 4-oxohex-2-enedioate + H(+). Its pathway is aromatic compound metabolism; 3-chlorocatechol degradation. Functionally, ring cleavage of cyclic ester dienelactone to produce maleylacetate. This chain is Carboxymethylenebutenolidase (clcD), found in Rhodococcus opacus (Nocardia opaca).